Consider the following 59-residue polypeptide: Venom protein 37.1 (59 aa).

The first 18 residues, methionine 1–alanine 18, serve as a signal peptide directing secretion.

This sequence belongs to the non-disulfide-bridged peptide (NDBP) superfamily. Long chain multifunctional peptide (group 2) family. In terms of tissue distribution, expressed by the venom gland.

The protein resides in the secreted. The sequence is that of Venom protein 37.1 from Lychas mucronatus (Chinese swimming scorpion).